The sequence spans 290 residues: Enoyl-CoA hydratase, mitochondrial (290 aa).

Residues 1-27 (MAALRALLPRACSSLLSSVRCPELRRF) constitute a mitochondrion transit peptide. 98-101 (ADIK) is a substrate binding site. Lys-101 bears the N6-acetyllysine; alternate mark. Lys-101 is modified (N6-succinyllysine; alternate). Ser-114 carries the phosphoserine modification. Lys-115 carries the post-translational modification N6-acetyllysine; alternate. Residue Lys-115 is modified to N6-succinyllysine; alternate. Residue Gly-141 participates in substrate binding. The residue at position 204 (Lys-204) is an N6-succinyllysine. N6-acetyllysine is present on Lys-211. N6-acetyllysine; alternate is present on Lys-217. Residue Lys-217 is modified to N6-succinyllysine; alternate.

Belongs to the enoyl-CoA hydratase/isomerase family. In terms of assembly, homohexamer; dimer of trimers. In terms of processing, acetylation of Lys-101 is observed in liver mitochondria from fasted mice but not from fed mice.

Its subcellular location is the mitochondrion matrix. The catalysed reaction is a (3S)-3-hydroxyacyl-CoA = a (2E)-enoyl-CoA + H2O. It catalyses the reaction a (3E)-enoyl-CoA = a 4-saturated (2E)-enoyl-CoA. The enzyme catalyses (3E)-hexenoyl-CoA = (2E)-hexenoyl-CoA. It carries out the reaction (3S)-3-hydroxybutanoyl-CoA = (2E)-butenoyl-CoA + H2O. The catalysed reaction is 3-hydroxyisovaleryl-CoA = 3-methylbut-2-enoyl-CoA + H2O. It catalyses the reaction 3-hydroxypropanoyl-CoA = acryloyl-CoA + H2O. The enzyme catalyses 3-hydroxybutanoyl-CoA = (2E)-butenoyl-CoA + H2O. It carries out the reaction 2-methylpropenoyl-CoA + H2O = (S)-3-hydroxyisobutanoyl-CoA. The catalysed reaction is (3S)-hydroxyhexanoyl-CoA = (2E)-hexenoyl-CoA + H2O. It catalyses the reaction (3S)-hydroxydecanoyl-CoA = (2E)-decenoyl-CoA + H2O. It participates in lipid metabolism; fatty acid beta-oxidation. Functionally, converts unsaturated trans-2-enoyl-CoA species ((2E)-enoyl-CoA) to the corresponding (3S)-3-hydroxyacyl-CoA species through addition of a water molecule to the double bond. Catalyzes the hydration of medium- and short-chained fatty enoyl-CoA thioesters from 4 carbons long (C4) up to C16. Has high substrate specificity for crotonyl-CoA ((2E)-butenoyl-CoA) and moderate specificity for acryloyl-CoA, 3-methylcrotonyl-CoA (3-methyl-(2E)-butenoyl-CoA) and methacrylyl-CoA ((2E)-2-methylpropenoyl-CoA). Can bind tiglyl-CoA (2-methylcrotonoyl-CoA), but hydrates only a small amount of this substrate. Plays a key role in the beta-oxidation spiral of short- and medium-chain fatty acid oxidation. At a lower rate than the hydratase reaction, catalyzes the isomerase reaction of trans-3-enoyl-CoA species (such as (3E)-hexenoyl-CoA) to trans-2-enoyl-CoA species (such as (2E)-hexenoyl-CoA), which are subsequently hydrated to 3(S)-3-hydroxyacyl-CoA species (such as (3S)-hydroxyhexanoyl-CoA). The sequence is that of Enoyl-CoA hydratase, mitochondrial from Mus musculus (Mouse).